A 106-amino-acid chain; its full sequence is CDGSH iron-sulfur domain-containing protein 1 (106 aa).

Ser-2 bears the N-acetylserine mark. A helical; Signal-anchor for type III membrane protein membrane pass occupies residues 10–29; that stretch reads EWIAAVTIAAGTAAIGYLAY. Residues 30–106 lie on the Cytoplasmic side of the membrane; that stretch reads KRFYVKDHRN…GPLIIKKKDT (77 aa). Lys-40 is covalently cross-linked (Glycyl lysine isopeptide (Lys-Gly) (interchain with G-Cter in ubiquitin)). The active-site Schiff-base intermediate with pyridoxal 5'-phosphate is the Lys-53. Lys-53 and Lys-66 each carry N6-acetyllysine; alternate. Residues Lys-53 and Lys-66 each participate in a glycyl lysine isopeptide (Lys-Gly) (interchain with G-Cter in ubiquitin); alternate cross-link. Residues Cys-70 and Cys-72 each contribute to the [2Fe-2S] cluster site. Glycyl lysine isopeptide (Lys-Gly) (interchain with G-Cter in ubiquitin) cross-links involve residues Lys-76 and Lys-77. 2 residues coordinate [2Fe-2S] cluster: Cys-81 and His-85. Positions 84-106 are disordered; the sequence is SHTKHNEETGDNVGPLIIKKKDT. Lys-87 participates in a covalent cross-link: Glycyl lysine isopeptide (Lys-Gly) (interchain with G-Cter in ubiquitin). An N6-acetyllysine; alternate modification is found at Lys-102. Lys-102 is covalently cross-linked (Glycyl lysine isopeptide (Lys-Gly) (interchain with G-Cter in ubiquitin); alternate). Glycyl lysine isopeptide (Lys-Gly) (interchain with G-Cter in ubiquitin) cross-links involve residues Lys-103 and Lys-104.

It belongs to the CISD protein family. As to quaternary structure, homodimer. [2Fe-2S] cluster is required as a cofactor. Pyridoxal 5'-phosphate serves as cofactor. Ubiquitinated by PRKN during mitophagy, leading to its degradation and enhancement of mitophagy. Deubiquitinated by USP30.

Its subcellular location is the mitochondrion outer membrane. It catalyses the reaction L-cysteine + 2-oxoglutarate = 2-oxo-3-sulfanylpropanoate + L-glutamate. Its function is as follows. L-cysteine transaminase that catalyzes the reversible transfer of the amino group from L-cysteine to the alpha-keto acid 2-oxoglutarate to respectively form 2-oxo-3-sulfanylpropanoate and L-glutamate. The catalytic cycle occurs in the presence of pyridoxal 5'-phosphate (PLP) cofactor that facilitates transamination by initially forming an internal aldimine with the epsilon-amino group of active site Lys-55 residue on the enzyme (PLP-enzyme aldimine), subsequently displaced by formation of an external aldimine with the substrate amino group (PLP-L-cysteine aldimine). The external aldimine is further deprotonated to form a carbanion intermediate, which in the presence of 2-oxoglutarate regenerates PLP yielding final products 2-oxo-3-sulfanylpropanoate and L-glutamate. The proton transfer in carbanion intermediate is suggested to be controlled by the active site lysine residue, whereas PLP stabilizes carbanion structure through electron delocalization, also known as the electron sink effect. Plays a key role in regulating maximal capacity for electron transport and oxidative phosphorylation. May be involved in iron-sulfur cluster shuttling and/or in redox reactions. Can transfer the [2Fe-2S] cluster to an apo-acceptor protein only when in the oxidation state, likely serving as a redox sensor that regulates mitochondrial iron-sulfur cluster assembly and iron trafficking upon oxidative stress. This Bos taurus (Bovine) protein is CDGSH iron-sulfur domain-containing protein 1 (CISD1).